The chain runs to 235 residues: uncharacterized protein (235 aa).

This is an uncharacterized protein from Salmonella typhimurium (strain LT2 / SGSC1412 / ATCC 700720).